A 238-amino-acid polypeptide reads, in one-letter code: Ribonuclease PH (238 aa).

Residues Arg86 and 124–126 (GTR) each bind phosphate.

It belongs to the RNase PH family. Homohexameric ring arranged as a trimer of dimers.

It carries out the reaction tRNA(n+1) + phosphate = tRNA(n) + a ribonucleoside 5'-diphosphate. Phosphorolytic 3'-5' exoribonuclease that plays an important role in tRNA 3'-end maturation. Removes nucleotide residues following the 3'-CCA terminus of tRNAs; can also add nucleotides to the ends of RNA molecules by using nucleoside diphosphates as substrates, but this may not be physiologically important. Probably plays a role in initiation of 16S rRNA degradation (leading to ribosome degradation) during starvation. This Chelativorans sp. (strain BNC1) protein is Ribonuclease PH.